A 209-amino-acid polypeptide reads, in one-letter code: Transmembrane 4 L6 family member 19 (209 aa).

Residues 1–16 are Cytoplasmic-facing; the sequence is MVSSPCTQASSRTCSR. A helical membrane pass occupies residues 17 to 37; it reads ILGLSLGTAALFAAGANVALL. The Extracellular segment spans residues 38–59; that stretch reads LPNWDVTYLLRGLLGRHAMLGT. The helical transmembrane segment at 60-80 threads the bilayer; the sequence is GLWGGGLMVLTAAILISLMGW. The Cytoplasmic segment spans residues 81-93; it reads RYGCFSKSGLCRS. The chain crosses the membrane as a helical span at residues 94–114; that stretch reads VLTALLSGGLALLGALICFVT. The Extracellular segment spans residues 115 to 175; the sequence is SGVALKDGPF…PSAAVVWHVS (61 aa). The N-linked (GlcNAc...) asparagine glycan is linked to N133. The chain crosses the membrane as a helical span at residues 176–196; it reads LFSALLCISLLQLLLVVVHVI. The important for homodimerization stretch occupies residues 186 to 196; the sequence is LQLLLVVVHVI. The Cytoplasmic portion of the chain corresponds to 197–209; that stretch reads NSLLGLFCSLCEK.

It belongs to the L6 tetraspanin family. May form homodimers and homooligomers. Interacts with integrins ITGAV and ITGB3. Interacts with components of members of the V0 complex of vacuolar(H+)-ATPase (V-ATPase), including ATP6V0B and ATP6V0D2; this interaction inhibits V1-V0 complex assembly. As to expression, in adipose tissue, expressed by macrophages.

Its subcellular location is the lysosome membrane. It localises to the cytoplasm. The protein localises to the cytoskeleton. The protein resides in the cell projection. It is found in the filopodium. In terms of biological role, negatively regulates vacuolar (H+)-ATPase (V-ATPase) activity by interacting with members of V-ATPase V0 complex and hence inhibiting V1-V0 complex assembly. Required for multinucleation during osteoclast differentiation. This chain is Transmembrane 4 L6 family member 19 (TM4SF19), found in Homo sapiens (Human).